Reading from the N-terminus, the 342-residue chain is Dysbindin (342 aa).

Serine 11 carries the post-translational modification Phosphoserine. Residues 83–180 are a coiled coil; sequence LSAHWEKKQA…AELDAEHSQK (98 aa). The Nuclear export signal motif lies at 243–256; that stretch reads LMDISDQEALDVFL. Residues 263-342 are disordered; that stretch reads NTLLSPISGP…ATLHSDDSDS (80 aa). Residues 286 to 305 show a composition bias toward low complexity; that stretch reads PTPSQAPATPPSSSSPGTDP. Serine 316, serine 321, and serine 340 each carry phosphoserine.

Belongs to the dysbindin family. As to quaternary structure, interacts (via its coiled coil domain) with KXD1. Interacts with CMYA5, PI4K2 and RNF151. Component of the biogenesis of lysosome-related organelles complex 1 (BLOC-1) composed of at least BLOC1S1, BLOC1S2, BLOC1S3, BLOC1S4, BLOC1S5, BLOC1S6, DTNBP1/BLOC1S7 and SNAPIN/BLOC1S8. Interacts directly in the complex with BLOC1S5, BLOC1S6 and SNAPIN/BLOC1S8. The BLOC-1 complex associates with the AP-3 protein complex and membrane protein cargos. This BLOC-1 complex also associates with the BLOC-2 complex in endosomes. Binds to DTNA and DTNB but may not be a physiological binding partner. Interacts with the DNA-dependent protein kinase complex DNA-PK; the interaction phosphorylates DTNBP1 in vitro. Interacts directly in this complex with XRCC5 and XRCC6. Interacts with AP3M1, AP3B2 and TRIM32. Interacts with XPO1; the interaction exports DTNBP1 out of the nucleus. Post-translationally, ubiquitinated by TRIM32. Ubiquitination leads to DTNBP1 degradation.

The protein localises to the cytoplasm. The protein resides in the cytoplasmic vesicle membrane. It is found in the cytoplasmic vesicle. Its subcellular location is the secretory vesicle. It localises to the synaptic vesicle membrane. The protein localises to the endosome membrane. The protein resides in the melanosome membrane. It is found in the nucleus. Its subcellular location is the postsynaptic density. It localises to the presynaptic cell membrane. The protein localises to the endoplasmic reticulum. Component of the BLOC-1 complex, a complex that is required for normal biogenesis of lysosome-related organelles (LRO), such as platelet dense granules and melanosomes. In concert with the AP-3 complex, the BLOC-1 complex is required to target membrane protein cargos into vesicles assembled at cell bodies for delivery into neurites and nerve terminals. The BLOC-1 complex, in association with SNARE proteins, is also proposed to be involved in neurite extension. Associates with the BLOC-2 complex to facilitate the transport of TYRP1 independent of AP-3 function. Plays a role in synaptic vesicle trafficking and in neurotransmitter release. Plays a role in the regulation of cell surface exposure of DRD2. May play a role in actin cytoskeleton reorganization and neurite outgrowth. May modulate MAPK8 phosphorylation. Appears to promote neuronal transmission and viability through regulating the expression of SNAP25 and SYN1, modulating PI3-kinase-Akt signaling and influencing glutamatergic release. Regulates the expression of SYN1 through binding to its promoter. Modulates prefrontal cortical activity via the dopamine/D2 pathway. The protein is Dysbindin (DTNBP1) of Bos taurus (Bovine).